The chain runs to 180 residues: Large ribosomal subunit protein uL6 (180 aa).

It belongs to the universal ribosomal protein uL6 family. In terms of assembly, part of the 50S ribosomal subunit.

In terms of biological role, this protein binds to the 23S rRNA, and is important in its secondary structure. It is located near the subunit interface in the base of the L7/L12 stalk, and near the tRNA binding site of the peptidyltransferase center. In Clostridium botulinum (strain Eklund 17B / Type B), this protein is Large ribosomal subunit protein uL6.